The following is a 465-amino-acid chain: Anthocyanidin 3-O-glucosyltransferase 2 (465 aa).

H22 (proton acceptor) is an active-site residue. 2 residues coordinate an anthocyanidin: H22 and Q87. Catalysis depends on D122, which acts as the Charge relay. T145 lines the UDP-alpha-D-glucose pocket. H154 contacts an anthocyanidin. UDP-alpha-D-glucose is bound by residues A345, Q347, H362, W365, N366, S367, and E370. G385 contributes to the an anthocyanidin binding site. UDP-alpha-D-glucose is bound by residues D386 and Q387.

The protein belongs to the UDP-glycosyltransferase family. As to expression, highest expression detected in fruit, with very low levels detected in petal and leaf.

The enzyme catalyses an anthocyanidin + UDP-alpha-D-glucose + H(+) = an anthocyanidin 3-O-beta-D-glucoside + UDP. The catalysed reaction is pelargonidin + UDP-alpha-D-glucose = pelargonidin 3-O-beta-D-glucoside + UDP. It catalyses the reaction cyanidin + UDP-alpha-D-glucose = cyanidin 3-O-beta-D-glucoside + UDP + H(+). The protein operates within pigment biosynthesis; anthocyanin biosynthesis. In the presence of other necessary color factors, this glycosylation reaction allows the accumulation of anthocyanin pigments. Anthocyanidins are the preferred substrates, while flavonols are only a minor substrate in vitro. This is Anthocyanidin 3-O-glucosyltransferase 2 from Fragaria ananassa (Strawberry).